The following is an 819-amino-acid chain: MSNIQNMSLEDIMGERFGRYSKYIIQERALPDIRDGLKPVQRRILYSMNKDGNTFEKGYRKSAKSVGNIMGNFHPHGDSSIYDAMVRMSQDWKNREILVEMHGNNGSMDGDPPAAMRYTEARLSEIAGYLLQDIEKNTVSFAWNFDDTEKEPTVLPAAFPNLLVNGSSGISAGYATDIPPHNLSEVIDAVVYMIDHPKASLEKLMEFLPGPDFPTGGIIQGADEIKKAYETGKGRVVVRSRTEIEELKGGKQQIIVTEIPYEVNKAVLVKKIDDVRVNNKVPGIVEVRDESDRTGLRIAIELKKEADSQTILNYLLKYTDLQVNYNFNMVAIDHFTPRQVGLQKILSSYISHRKDIIIERSKFDKAKAEKRLHIVEGLIRVLSILDEIIALIRSSDNKADAKENLKVSYDFSEEQAEAIVTLQLYRLTNTDIVTLQNEENDLRDLITTLSAIIGDEATMYNVMKRELREVKKKFANPRLSELQAESQIIEIDTASLIAEEETFVSVTRGGYLKRTSPRSFNASSLEEVGKRDDDELIFVKQAKTTEHLLLFTTLGNVIYRPIHELTDLRWKDIGEHLSQTISNFATEEEILYADIVTSFDQGLYVAVTQNGFIKRFDRKELSPWRTYKSKSTKYVKLKDDKDRVVTLSPVIMEDLLLVTKNGYALRFSSQEVPIQGLKSAGVKGINLKNDDSLASAFAVTSNSFFVLTQRGSLKRMAVDDIPQTSRANRGLLVLRELKTKPHRVFLAGGVQSDTSAEQFDLFTDIPEEETNQQMLEVISKTGQTYEIALETLSLSERISNGSFISDTISDQEVLVARTR.

The 467-residue stretch at 30 to 496 (LPDIRDGLKP…QIIEIDTASL (467 aa)) folds into the Topo IIA-type catalytic domain. Residue Y118 is the O-(5'-phospho-DNA)-tyrosine intermediate of the active site.

The protein belongs to the type II topoisomerase GyrA/ParC subunit family. ParC type 2 subfamily. As to quaternary structure, heterotetramer composed of ParC and ParE.

Its subcellular location is the cell membrane. The catalysed reaction is ATP-dependent breakage, passage and rejoining of double-stranded DNA.. Its function is as follows. Topoisomerase IV is essential for chromosome segregation. It relaxes supercoiled DNA. Performs the decatenation events required during the replication of a circular DNA molecule. This is DNA topoisomerase 4 subunit A from Streptococcus pyogenes serotype M1.